The sequence spans 394 residues: GDSL esterase/lipase At2g27360 (394 aa).

The first 24 residues, 1 to 24 (MASQDCHMLLSFFISTFLITVVTS), serve as a signal peptide directing secretion. Catalysis depends on Ser40, which acts as the Nucleophile. 2 N-linked (GlcNAc...) asparagine glycosylation sites follow: Asn136 and Asn319. Catalysis depends on residues Asp344 and His347. 2 N-linked (GlcNAc...) asparagine glycosylation sites follow: Asn371 and Asn382.

Belongs to the 'GDSL' lipolytic enzyme family.

Its subcellular location is the secreted. The polypeptide is GDSL esterase/lipase At2g27360 (Arabidopsis thaliana (Mouse-ear cress)).